The sequence spans 408 residues: DNA primase DnaG (408 aa).

The Toprim domain occupies 171–250 (DAIIIVEGRA…AYSPRGKSVE (80 aa)). Mg(2+) is bound by residues E177, D219, and D221. Residues 276–323 (AEENVERLPPSAAPAEVRAPAGAGRTSEGERPPRREWDSKPPSTLGEH) are disordered. The segment covering 284–298 (PPSAAPAEVRAPAGA) has biased composition (low complexity). Over residues 302-314 (SEGERPPRREWDS) the composition is skewed to basic and acidic residues.

Belongs to the archaeal DnaG primase family. Forms a ternary complex with MCM helicase and DNA. Mg(2+) serves as cofactor.

The enzyme catalyses ssDNA + n NTP = ssDNA/pppN(pN)n-1 hybrid + (n-1) diphosphate.. Functionally, RNA polymerase that catalyzes the synthesis of short RNA molecules used as primers for DNA polymerase during DNA replication. The sequence is that of DNA primase DnaG from Methanoculleus marisnigri (strain ATCC 35101 / DSM 1498 / JR1).